The chain runs to 299 residues: Kruppel-like factor 2 (299 aa).

Disordered regions lie at residues 19–38 and 146–189; these read YQNAHHQHHQQHYHQQSHHH and YSFS…RRDK. Positions 23–38 are enriched in basic residues; the sequence is HHQHHQQHYHQQSHHH. Basic and acidic residues predominate over residues 153 to 180; it reads SGKDEEDPRIPLKDRGRVYHPQSTEKPK. 3 consecutive C2H2-type zinc fingers follow at residues 198–222, 228–252, and 258–280; these read HKCFYQGCGKVYTKSSHLTAHERVH, YPCEWPGCSWRFARSDELTRHYRKH, and FACKECSRKFSRSDHLQLHMKRH.

This sequence belongs to the krueppel C2H2-type zinc-finger protein family. As to expression, expressed predominantly in intestine.

Its subcellular location is the nucleus. In terms of biological role, probable transcription factor which regulates lipid metabolism. In Caenorhabditis elegans, this protein is Kruppel-like factor 2.